The chain runs to 206 residues: Alpha-1-acid glycoprotein 3 (206 aa).

Residues 1–18 (MELHTVLIMLSLLPLLEA) form the signal peptide. Asn33, Asn75, and Asn103 each carry an N-linked (GlcNAc...) asparagine glycan. Cys90 and Cys183 are joined by a disulfide. The disordered stretch occupies residues 187–206 (EKKHLELEKETKKDPEESQA).

It belongs to the calycin superfamily. Lipocalin family.

The protein resides in the secreted. Functions as a transport protein in the blood stream. Binds various ligands in the interior of its beta-barrel domain. Appears to function in modulating the activity of the immune system during the acute-phase reaction. The sequence is that of Alpha-1-acid glycoprotein 3 (Orm3) from Mus musculus (Mouse).